The primary structure comprises 236 residues: Baculoviral IAP repeat-containing protein 8 (236 aa).

The stretch at 7–70 (RLITFGTWMY…KWYPGCKYLL (64 aa)) is one BIR repeat. Zn(2+)-binding residues include C39, C42, H59, and C66. Residues 189 to 224 (CKICMDRHIAVVFIPCGHLVTCKQCAEAVDRCPMCS) form an RING-type zinc finger.

Belongs to the IAP family. Binds to caspase-9. In terms of tissue distribution, testis specific in normal tissues.

It localises to the cytoplasm. Its function is as follows. Protects against apoptosis mediated by BAX. This chain is Baculoviral IAP repeat-containing protein 8 (BIRC8), found in Homo sapiens (Human).